A 270-amino-acid chain; its full sequence is 3-phenylpropionate-dihydrodiol/cinnamic acid-dihydrodiol dehydrogenase (270 aa).

Residue 10-34 participates in NAD(+) binding; sequence FITGGGSGLGLALVERFIEEGAQVA. Position 143 (S143) interacts with substrate. The active-site Proton acceptor is the Y156.

The protein belongs to the short-chain dehydrogenases/reductases (SDR) family.

The enzyme catalyses 3-(cis-5,6-dihydroxycyclohexa-1,3-dien-1-yl)propanoate + NAD(+) = 3-(2,3-dihydroxyphenyl)propanoate + NADH + H(+). It catalyses the reaction (2E)-3-(cis-5,6-dihydroxycyclohexa-1,3-dien-1-yl)prop-2-enoate + NAD(+) = (2E)-3-(2,3-dihydroxyphenyl)prop-2-enoate + NADH + H(+). The protein operates within aromatic compound metabolism; 3-phenylpropanoate degradation. In terms of biological role, converts 3-phenylpropionate-dihydrodiol (PP-dihydrodiol) and cinnamic acid-dihydrodiol (CI-dihydrodiol) into 3-(2,3-dihydroxylphenyl)propanoic acid (DHPP) and 2,3-dihydroxicinnamic acid (DHCI), respectively. The sequence is that of 3-phenylpropionate-dihydrodiol/cinnamic acid-dihydrodiol dehydrogenase from Shigella sonnei (strain Ss046).